Here is a 604-residue protein sequence, read N- to C-terminus: Glucose oxidase 2 (604 aa).

A signal peptide spans 1–16 (MKLLGLLSGLVVVATA). 2 residues coordinate FAD: leucine 49 and threonine 50. The N-linked (GlcNAc...) asparagine glycan is linked to asparagine 63. Position 70 (glutamate 70) interacts with FAD. A glycan (N-linked (GlcNAc...) asparagine) is linked at asparagine 109. 4 residues coordinate FAD: serine 123, asparagine 127, glycine 128, and serine 130. Residues cysteine 184 and cysteine 226 are joined by a disulfide bond. Residue asparagine 214 is glycosylated (N-linked (GlcNAc...) asparagine). Residue valine 270 participates in FAD binding. Residues asparagine 375, asparagine 408, and asparagine 517 are each glycosylated (N-linked (GlcNAc...) asparagine). Histidine 536 functions as the Proton acceptor in the catalytic mechanism. Residues arginine 557 and valine 558 each contribute to the O2 site. FAD contacts are provided by glycine 569 and methionine 581. N-linked (GlcNAc...) asparagine glycosylation occurs at asparagine 600.

It belongs to the GMC oxidoreductase family. Homodimer. It depends on FAD as a cofactor.

It is found in the secreted. The protein localises to the cell wall. Its subcellular location is the cytoplasm. It localises to the extracellular space. The protein resides in the extracellular matrix. It carries out the reaction beta-D-glucose + O2 = D-glucono-1,5-lactone + H2O2. Its function is as follows. Glucose oxidase catalyzes the oxidation of beta-D-glucose to D-glucono-delta-lactone and hydrogen peroxide in the presence of molecular oxygen. D-glucono-delta-lactone is sequentially hydrolyzed by lactonase to D-gluconic acid, and the resulting hydrogen peroxide is hydrolyzed by catalase to oxygen and water. Acts as a key factor contributing to fungal disease of apple. The production of gluconic acid leads to host tissue acidification that enhances the expression of pectolytic enzymes and the establishment of conditions for necrotrophic development of P.expansum. The chain is Glucose oxidase 2 from Penicillium expansum (Blue mold rot fungus).